The chain runs to 159 residues: Phosphopantetheine adenylyltransferase (159 aa).

Residue Thr10 coordinates substrate. ATP contacts are provided by residues 10–11 and His18; that span reads TF. Residues Lys42, Leu74, and Arg88 each contribute to the substrate site. ATP-binding positions include 89 to 91, Glu99, and 124 to 130; these read GMR and WSYVSST.

The protein belongs to the bacterial CoaD family. In terms of assembly, homohexamer. Mg(2+) is required as a cofactor.

Its subcellular location is the cytoplasm. The catalysed reaction is (R)-4'-phosphopantetheine + ATP + H(+) = 3'-dephospho-CoA + diphosphate. Its pathway is cofactor biosynthesis; coenzyme A biosynthesis; CoA from (R)-pantothenate: step 4/5. Reversibly transfers an adenylyl group from ATP to 4'-phosphopantetheine, yielding dephospho-CoA (dPCoA) and pyrophosphate. The chain is Phosphopantetheine adenylyltransferase from Mannheimia succiniciproducens (strain KCTC 0769BP / MBEL55E).